The chain runs to 130 residues: Small ribosomal subunit protein uS9 (130 aa).

Belongs to the universal ribosomal protein uS9 family.

This chain is Small ribosomal subunit protein uS9, found in Phytoplasma australiense.